An 859-amino-acid polypeptide reads, in one-letter code: Leucine--tRNA ligase (859 aa).

A 'HIGH' region motif is present at residues 42 to 52; sequence PYPSGRLHMGH. Positions 618-622 match the 'KMSKS' region motif; it reads KMSKS. Position 621 (lysine 621) interacts with ATP.

This sequence belongs to the class-I aminoacyl-tRNA synthetase family.

It is found in the cytoplasm. The enzyme catalyses tRNA(Leu) + L-leucine + ATP = L-leucyl-tRNA(Leu) + AMP + diphosphate. In Shewanella baltica (strain OS185), this protein is Leucine--tRNA ligase.